Consider the following 176-residue polypeptide: RNA 2',3'-cyclic phosphodiesterase (176 aa).

The active-site Proton donor is histidine 39. 2 consecutive short sequence motifs (HXTX) follow at residues 39–42 (HITL) and 122–125 (HLTV). Histidine 122 acts as the Proton acceptor in catalysis.

It belongs to the 2H phosphoesterase superfamily. ThpR family.

The catalysed reaction is a 3'-end 2',3'-cyclophospho-ribonucleotide-RNA + H2O = a 3'-end 2'-phospho-ribonucleotide-RNA + H(+). Functionally, hydrolyzes RNA 2',3'-cyclic phosphodiester to an RNA 2'-phosphomonoester. The polypeptide is RNA 2',3'-cyclic phosphodiesterase (Archaeoglobus fulgidus (strain ATCC 49558 / DSM 4304 / JCM 9628 / NBRC 100126 / VC-16)).